The primary structure comprises 190 residues: Potassium-transporting ATPase KdpC subunit (190 aa).

A helical membrane pass occupies residues 10-30 (TFIFLLLITGGVYPLLTTALG).

It belongs to the KdpC family. The system is composed of three essential subunits: KdpA, KdpB and KdpC.

The protein localises to the cell inner membrane. Part of the high-affinity ATP-driven potassium transport (or Kdp) system, which catalyzes the hydrolysis of ATP coupled with the electrogenic transport of potassium into the cytoplasm. This subunit acts as a catalytic chaperone that increases the ATP-binding affinity of the ATP-hydrolyzing subunit KdpB by the formation of a transient KdpB/KdpC/ATP ternary complex. The sequence is that of Potassium-transporting ATPase KdpC subunit from Escherichia coli O157:H7.